The primary structure comprises 825 residues: NT-3 growth factor receptor (825 aa).

Positions 1–31 (MDVSLCPAKCSFWRIFLLGSVWLDYVGSVLA) are cleaved as a signal peptide. 2 disulfides stabilise this stretch: Cys-32-Cys-38 and Cys-36-Cys-45. Residues 32 to 429 (CPANCVCSKT…TVTHKPEEDT (398 aa)) lie on the Extracellular side of the membrane. N-linked (GlcNAc...) asparagine glycans are attached at residues Asn-68, Asn-72, and Asn-79. 2 LRR repeats span residues 104-125 (GLQKLTIKNSGLRNIQPRAFAK) and 128-149 (HLRYINLSSNRLTTLSWQLFQT). N-linked (GlcNAc...) asparagine glycosylation is found at Asn-133 and Asn-163. An LRRCT domain is found at 160–209 (NFFNCSCDIRWMQLWQEQGEARLDSQSLYCISADGSQLPLFRMNISQCDL). Disulfide bonds link Cys-164–Cys-189 and Cys-166–Cys-207. N-linked (GlcNAc...) asparagine glycosylation is found at Asn-203, Asn-218, Asn-232, Asn-259, Asn-267, Asn-272, and Asn-294. 2 Ig-like C2-type domains span residues 210–300 (PEIS…VALT) and 309–382 (SLVE…IAKN). Cys-231 and Cys-284 form a disulfide bridge. A disulfide bond links Cys-320 and Cys-362. Residues Asn-375 and Asn-388 are each glycosylated (N-linked (GlcNAc...) asparagine). A helical membrane pass occupies residues 430–453 (FGVSIAVGLAAFACVLLVVLFIMI). Residues 454–825 (NKYGRRSKFG…ATPIYLDILG (372 aa)) are Cytoplasmic-facing. Phosphoserine is present on Ser-493. Tyr-516 is subject to Phosphotyrosine. The 288-residue stretch at 538–825 (IVLKRELGEG…ATPIYLDILG (288 aa)) folds into the Protein kinase domain. ATP is bound by residues 544 to 552 (LGEGAFGKV) and Lys-572. The active-site Proton acceptor is the Asp-679. Phosphotyrosine; by autocatalysis occurs at positions 705, 709, and 710.

Belongs to the protein kinase superfamily. Tyr protein kinase family. Insulin receptor subfamily. As to quaternary structure, exists in a dynamic equilibrium between monomeric (low affinity) and dimeric (high affinity) structures. Binds SH2B2. Interacts with SQSTM1 and KIDINS220. Interacts with PTPRS. Interacts with MAPK8IP3/JIP3. In terms of processing, ligand-mediated auto-phosphorylation. In terms of tissue distribution, isoform 2 expression is restricted to specific areas in adult brain. Isoform 3 transcripts are readily detected early during embryogenesis and are expressed predominantly in adult brain and gonads.

It localises to the membrane. The enzyme catalyses L-tyrosyl-[protein] + ATP = O-phospho-L-tyrosyl-[protein] + ADP + H(+). Functionally, receptor tyrosine kinase involved in nervous system and probably heart development. Upon binding of its ligand NTF3/neurotrophin-3, NTRK3 autophosphorylates and activates different signaling pathways, including the phosphatidylinositol 3-kinase/AKT and the MAPK pathways, that control cell survival and differentiation. This chain is NT-3 growth factor receptor (Ntrk3), found in Mus musculus (Mouse).